The following is a 205-amino-acid chain: MQVQSLEVTTGKSSEIEIADGVFGVPYNEALLHQVVVAQMAGMRSANAVQKNRAAVRGGGRKPWKQKGTGRARAGSIRSPIWRGGGRAFPGGNENYTQKVNKKMWAGAMRTVLAELLRQGRLQIIQQEDFGEPRSRLGRDWLSRAGGDNVLLVMGEVPLNLFLGLRNFPRVGIAGWQDVGPADLLQYGRVLLDVEAAARLGEVYG.

The segment at 53–77 is disordered; the sequence is RAAVRGGGRKPWKQKGTGRARAGSI. The segment covering 59–70 has biased composition (basic residues); it reads GGRKPWKQKGTG.

It belongs to the universal ribosomal protein uL4 family. Part of the 50S ribosomal subunit.

One of the primary rRNA binding proteins, this protein initially binds near the 5'-end of the 23S rRNA. It is important during the early stages of 50S assembly. It makes multiple contacts with different domains of the 23S rRNA in the assembled 50S subunit and ribosome. Functionally, forms part of the polypeptide exit tunnel. The sequence is that of Large ribosomal subunit protein uL4 from Acidithiobacillus ferrooxidans (strain ATCC 23270 / DSM 14882 / CIP 104768 / NCIMB 8455) (Ferrobacillus ferrooxidans (strain ATCC 23270)).